The chain runs to 162 residues: Protein NrdI (162 aa).

This sequence belongs to the NrdI family.

Its function is as follows. Probably involved in ribonucleotide reductase function. The polypeptide is Protein NrdI (Streptococcus pyogenes serotype M3 (strain ATCC BAA-595 / MGAS315)).